Reading from the N-terminus, the 297-residue chain is Giardin subunit alpha-6 (297 aa).

Annexin repeat units follow at residues 3 to 72, 74 to 146, 153 to 222, and 226 to 295; these read TTVQ…AYLW, KPGD…HWIL, FDID…AAHY, and HPAR…ILWR.

This sequence belongs to the annexin family. Giardin subunit alpha subfamily.

The protein localises to the cytoplasm. It is found in the cytoskeleton. Functionally, giardins are involved in parasite attachment to the intestinal mucosa and in the cytoskeletal disassembly and reassembly that marks the transition from infectious trophozoite to transmissible cyst. They may interact with other cytoskeletal proteins such as microtubules in the microribbons or crossbridges, to maintain the integrity of the ventral disk. This is Giardin subunit alpha-6 from Giardia intestinalis (Giardia lamblia).